The primary structure comprises 162 residues: Selenoprotein F (162 aa).

A signal peptide spans 1-28; that stretch reads MAAGQGGWLRPALGLRLLLATAFQAVSA. Residue Sec93 is a non-standard amino acid, selenocysteine.

Belongs to the selenoprotein M/F family. Forms a tight complex with UGGT1/UGCGL1. Interacts with UGGT2/UGCGL2. Interacts with RDH11. As to expression, highest levels in prostate, lower levels in brain, lung, thyroid gland, and large intestine.

Its subcellular location is the endoplasmic reticulum lumen. May be involved in redox reactions associated with the formation of disulfide bonds. May contribute to the quality control of protein folding in the endoplasmic reticulum. May regulate protein folding by enhancing the catalytic activity of UGGT1/UGCGL1 and UGGT2/UGCGL2. This is Selenoprotein F from Rattus norvegicus (Rat).